The following is a 208-amino-acid chain: Inosine triphosphate pyrophosphatase (208 aa).

Position 2 is an N-acetylalanine (Ala2). 14–19 (TGNAKK) is a binding site for ITP. Glu44 is a Mg(2+) binding site. ITP contacts are provided by residues Lys56, 72–73 (DT), Lys89, 149–152 (FGWD), Lys172, and 177–178 (HR).

This sequence belongs to the HAM1 NTPase family. Homodimer. The cofactor is Mg(2+). Requires Mn(2+) as cofactor.

Its subcellular location is the cytoplasm. It carries out the reaction ITP + H2O = IMP + diphosphate + H(+). The catalysed reaction is dITP + H2O = dIMP + diphosphate + H(+). The enzyme catalyses XTP + H2O = XMP + diphosphate + H(+). It catalyses the reaction N(6)-hydroxy-dATP + H2O = N(6)-hydroxy-dAMP + diphosphate + H(+). Functionally, pyrophosphatase that hydrolyzes the non-canonical purine nucleotides inosine triphosphate (ITP), deoxyinosine triphosphate (dITP) as well as 2'-deoxy-N-6-hydroxylaminopurine triphosphate (dHAPTP) and xanthosine 5'-triphosphate (XTP) to their respective monophosphate derivatives. The enzyme does not distinguish between the deoxy- and ribose forms. Probably excludes non-canonical purines from RNA and DNA precursor pools, thus preventing their incorporation into RNA and DNA and avoiding chromosomal lesions. In Bos taurus (Bovine), this protein is Inosine triphosphate pyrophosphatase.